The primary structure comprises 255 residues: ATP synthase subunit a (255 aa).

6 consecutive transmembrane segments (helical) span residues 40-60, 109-129, 135-155, 163-183, 196-218, and 230-250; these read TEPI…ASEV, LIGG…IPGV, NLNI…YYGL, VAHL…IEVI, LMLN…ALFV, and IVVQ…LATE.

This sequence belongs to the ATPase A chain family. In terms of assembly, F-type ATPases have 2 components, CF(1) - the catalytic core - and CF(0) - the membrane proton channel. CF(1) has five subunits: alpha(3), beta(3), gamma(1), delta(1), epsilon(1). CF(0) has three main subunits: a(1), b(2) and c(9-12). The alpha and beta chains form an alternating ring which encloses part of the gamma chain. CF(1) is attached to CF(0) by a central stalk formed by the gamma and epsilon chains, while a peripheral stalk is formed by the delta and b chains.

It is found in the cell inner membrane. Key component of the proton channel; it plays a direct role in the translocation of protons across the membrane. The protein is ATP synthase subunit a of Sorangium cellulosum (strain So ce56) (Polyangium cellulosum (strain So ce56)).